A 307-amino-acid polypeptide reads, in one-letter code: MAKVVAIVGPTAVGKTALSLRVAQKFGGEVISGDSMQVYRGLDIGTAKATTEERSLVPHHLIDVKDIHDRFSVADFKVAAEREIDQITDRGHLPLVVGGTGFYLQALVENLALGRDQFDQESAAIRDHWHQIATERGKQFVWEQLNERDPAAAAKIPVANLRRVIRALEVIEKTGALFSTQPQPPAKNDFLIIGLTTQRPVLYQRINQRVDQMVANGLLEEAKWLYDQGGENEQAGKGIGYRELFPHFAGTVSRQEALEKIKLDSRHYAKRQLTWFRNQMTVHWFDLVSQQNTTEEIEALINGWLKK.

Residue 9 to 16 (GPTAVGKT) coordinates ATP. Substrate is bound at residue 11 to 16 (TAVGKT). The tract at residues 34-37 (DSMQ) is interaction with substrate tRNA.

Belongs to the IPP transferase family. In terms of assembly, monomer. It depends on Mg(2+) as a cofactor.

It carries out the reaction adenosine(37) in tRNA + dimethylallyl diphosphate = N(6)-dimethylallyladenosine(37) in tRNA + diphosphate. Catalyzes the transfer of a dimethylallyl group onto the adenine at position 37 in tRNAs that read codons beginning with uridine, leading to the formation of N6-(dimethylallyl)adenosine (i(6)A). In Limosilactobacillus fermentum (strain NBRC 3956 / LMG 18251) (Lactobacillus fermentum), this protein is tRNA dimethylallyltransferase.